The primary structure comprises 175 residues: Peptidyl-prolyl cis-trans isomerase B (175 aa).

The region spanning 3–172 is the PPIase cyclophilin-type domain; it reads EQLYATLKTN…EDVVIESVVV (170 aa).

It belongs to the cyclophilin-type PPIase family.

Its subcellular location is the cytoplasm. It catalyses the reaction [protein]-peptidylproline (omega=180) = [protein]-peptidylproline (omega=0). With respect to regulation, inhibited by cyclosporin A (CsA). Functionally, PPIases accelerate the folding of proteins. It catalyzes the cis-trans isomerization of proline imidic peptide bonds in oligopeptides. In Streptomyces anulatus (Streptomyces chrysomallus), this protein is Peptidyl-prolyl cis-trans isomerase B (cypB).